The sequence spans 341 residues: Fructose-1,6-bisphosphatase, cytosolic (341 aa).

Residues E100, D121, L123, and D124 each coordinate Mg(2+). Substrate is bound by residues 124–127, N215, Y247, Y267, and K277; that span reads DGSS. E283 is a Mg(2+) binding site.

The protein belongs to the FBPase class 1 family. The cofactor is Mg(2+).

It is found in the cytoplasm. The enzyme catalyses beta-D-fructose 1,6-bisphosphate + H2O = beta-D-fructose 6-phosphate + phosphate. This chain is Fructose-1,6-bisphosphatase, cytosolic (FBPban1), found in Musa acuminata (Banana).